A 67-amino-acid polypeptide reads, in one-letter code: MAVPKRKMSRANTRARRSQWKATAPTLVKSVENGRVSYRLPHQAELKTDAAGTPLFLEYKGRKVADA.

Basic residues predominate over residues 1–19 (MAVPKRKMSRANTRARRSQ). Residues 1 to 21 (MAVPKRKMSRANTRARRSQWK) are disordered.

Belongs to the bacterial ribosomal protein bL32 family.

The protein is Large ribosomal subunit protein bL32 of Micrococcus luteus (strain ATCC 4698 / DSM 20030 / JCM 1464 / CCM 169 / CCUG 5858 / IAM 1056 / NBRC 3333 / NCIMB 9278 / NCTC 2665 / VKM Ac-2230) (Micrococcus lysodeikticus).